Here is a 96-residue protein sequence, read N- to C-terminus: CRISPR-associated endoribonuclease Cas2 1 (96 aa).

Asp8 is a Mg(2+) binding site.

Belongs to the CRISPR-associated endoribonuclease Cas2 protein family. Homodimer, forms a heterotetramer with a Cas1 homodimer. Requires Mg(2+) as cofactor.

CRISPR (clustered regularly interspaced short palindromic repeat), is an adaptive immune system that provides protection against mobile genetic elements (viruses, transposable elements and conjugative plasmids). CRISPR clusters contain sequences complementary to antecedent mobile elements and target invading nucleic acids. CRISPR clusters are transcribed and processed into CRISPR RNA (crRNA). Functions as a ssRNA-specific endoribonuclease. Involved in the integration of spacer DNA into the CRISPR cassette. The polypeptide is CRISPR-associated endoribonuclease Cas2 1 (Moorella thermoacetica (strain ATCC 39073 / JCM 9320)).